The chain runs to 215 residues: Protein-L-isoaspartate O-methyltransferase (215 aa).

Ser-62 is a catalytic residue.

It belongs to the methyltransferase superfamily. L-isoaspartyl/D-aspartyl protein methyltransferase family.

It is found in the cytoplasm. The catalysed reaction is [protein]-L-isoaspartate + S-adenosyl-L-methionine = [protein]-L-isoaspartate alpha-methyl ester + S-adenosyl-L-homocysteine. Functionally, catalyzes the methyl esterification of L-isoaspartyl residues in peptides and proteins that result from spontaneous decomposition of normal L-aspartyl and L-asparaginyl residues. It plays a role in the repair and/or degradation of damaged proteins. This chain is Protein-L-isoaspartate O-methyltransferase, found in Ruegeria pomeroyi (strain ATCC 700808 / DSM 15171 / DSS-3) (Silicibacter pomeroyi).